The sequence spans 363 residues: Peptide chain release factor 1 (363 aa).

Gln-237 is subject to N5-methylglutamine. Positions 284 to 296 (EDEKRRSAEESTR) are enriched in basic and acidic residues. The tract at residues 284-306 (EDEKRRSAEESTRRSLVASGDRS) is disordered.

The protein belongs to the prokaryotic/mitochondrial release factor family. In terms of processing, methylated by PrmC. Methylation increases the termination efficiency of RF1.

The protein localises to the cytoplasm. Its function is as follows. Peptide chain release factor 1 directs the termination of translation in response to the peptide chain termination codons UAG and UAA. The polypeptide is Peptide chain release factor 1 (Shewanella oneidensis (strain ATCC 700550 / JCM 31522 / CIP 106686 / LMG 19005 / NCIMB 14063 / MR-1)).